The following is a 474-amino-acid chain: Nuclear hormone receptor family member nhr-91 (474 aa).

Residues 50–69 (SMTPSFSQTESPNSETDDST) form a disordered region. A compositionally biased stretch (polar residues) spans 51–69 (MTPSFSQTESPNSETDDST). The nuclear receptor DNA-binding region spans 97 to 172 (SKLCSVCGDK…KGMLTEAVRE (76 aa)). 2 NR C4-type zinc fingers span residues 100–120 (CSVC…CEGC) and 136–155 (CSQD…CQSC). Positions 215-474 (SGKKLIKELV…KNPRRLVFDE (260 aa)) constitute an NR LBD domain.

This sequence belongs to the nuclear hormone receptor family.

Its subcellular location is the nucleus. Its function is as follows. Orphan nuclear receptor. The sequence is that of Nuclear hormone receptor family member nhr-91 (nhr-91) from Caenorhabditis elegans.